We begin with the raw amino-acid sequence, 569 residues long: Ribonuclease J (569 aa).

Positions 81, 83, 85, 86, 150, and 172 each coordinate Zn(2+). Substrate is bound at residue 373-377; the sequence is HASGH. Zn(2+) is bound at residue His-399.

The protein belongs to the metallo-beta-lactamase superfamily. RNA-metabolizing metallo-beta-lactamase-like family. Bacterial RNase J subfamily. In terms of assembly, homodimer, may be a subunit of the RNA degradosome. The cofactor is Zn(2+).

Its subcellular location is the cytoplasm. In terms of biological role, an RNase that has 5'-3' exonuclease and possibly endoonuclease activity. Involved in maturation of rRNA and in some organisms also mRNA maturation and/or decay. The sequence is that of Ribonuclease J from Mycoplasma pneumoniae (strain ATCC 29342 / M129 / Subtype 1) (Mycoplasmoides pneumoniae).